A 248-amino-acid chain; its full sequence is Mitochondrial import inner membrane translocase subunit Tim21 (248 aa).

The N-terminal 18 residues, methionine 1–serine 18, are a transit peptide targeting the mitochondrion. The tract at residues threonine 67–serine 98 is disordered. Residues phenylalanine 108 to isoleucine 128 traverse the membrane as a helical segment.

It belongs to the TIM21 family. In terms of assembly, component of the TIM23 complex. Component of the MITRAC (mitochondrial translation regulation assembly intermediate of cytochrome c oxidase complex) complex, the core components of this complex being COA3/MITRAC12 and COX14. Interacts with COA3 and MT-CO1/COX1.

The protein resides in the mitochondrion membrane. Its function is as follows. Participates in the translocation of transit peptide-containing proteins across the mitochondrial inner membrane. Also required for assembly of mitochondrial respiratory chain complex I and complex IV as component of the MITRAC (mitochondrial translation regulation assembly intermediate of cytochrome c oxidase complex) complex. Probably shuttles between the presequence translocase and respiratory-chain assembly intermediates in a process that promotes incorporation of early nuclear-encoded subunits into these complexes. The polypeptide is Mitochondrial import inner membrane translocase subunit Tim21 (TIMM21) (Homo sapiens (Human)).